The primary structure comprises 2376 residues: Reducing polyketide synthase DEP5 (2376 aa).

Residues 47–477 (LEPIAVVGMG…GTNAHTIIES (431 aa)) form the Ketosynthase family 3 (KS3) domain. Active-site for beta-ketoacyl synthase activity residues include cysteine 221, histidine 358, and histidine 399. Positions 593–906 (VFTGQGAQWA…QYLPTLVRGF (314 aa)) are malonyl-CoA:ACP transacylase (MAT) domain. The active-site For malonyltransferase activity is the serine 685. Positions 983-1121 (HDVLGQLTTG…GSIAIRTSAR (139 aa)) are N-terminal hotdog fold. Positions 983 to 1158 (HDVLGQLTTG…FNYGPTFQDM (176 aa)) are dehydratase (DH) domain. The 304-residue stretch at 983-1286 (HDVLGQLTTG…CIAYEAAIPQ (304 aa)) folds into the PKS/mFAS DH domain. Catalysis depends on histidine 1015, which acts as the Proton acceptor; for dehydratase activity. The interval 1131–1286 (LPQRASGRLW…CIAYEAAIPQ (156 aa)) is C-terminal hotdog fold. The active-site Proton donor; for dehydratase activity is the aspartate 1195. The interval 1659-1964 (GRIQAGKVVF…DSICDNKIVI (306 aa)) is enoyl reductase (ER) domain. Residues 1988–2163 (ATYLLVGCLG…KPACAVVLPM (176 aa)) are ketoreductase (KR) domain. Residues 2289-2368 (DLVRDHFIAK…KFSELVCGAQ (80 aa)) enclose the Carrier domain. Serine 2327 bears the O-(pantetheine 4'-phosphoryl)serine mark.

The protein operates within polyketide biosynthesis. In terms of biological role, reducing polyketide synthase; part of the gene cluster that mediates the biosynthesis of depudecin, a highly oxidized eleven-carbon linear polyketide that acts as a histone deacetylase (HDAC) inhibitor and makes a small contribution to pathogenesis. The reducing polyketide synthase DEP5 is the central enzyme in depudecin biosynthesis by yielding the backbone polyketide chain. The monooxygenases DEP2 and DEP4, as well as the uncharacterized protein DEP1, then act as tailoring enzymes to modify the intermediate polyketide chain into depudecin. The protein is Reducing polyketide synthase DEP5 of Alternaria brassicicola (Dark leaf spot agent).